The primary structure comprises 110 residues: Large ribosomal subunit protein uL22 (110 aa).

The protein belongs to the universal ribosomal protein uL22 family. As to quaternary structure, part of the 50S ribosomal subunit.

This protein binds specifically to 23S rRNA; its binding is stimulated by other ribosomal proteins, e.g. L4, L17, and L20. It is important during the early stages of 50S assembly. It makes multiple contacts with different domains of the 23S rRNA in the assembled 50S subunit and ribosome. In terms of biological role, the globular domain of the protein is located near the polypeptide exit tunnel on the outside of the subunit, while an extended beta-hairpin is found that lines the wall of the exit tunnel in the center of the 70S ribosome. The protein is Large ribosomal subunit protein uL22 of Teredinibacter turnerae (strain ATCC 39867 / T7901).